Here is a 365-residue protein sequence, read N- to C-terminus: Aminomethyltransferase (365 aa).

Belongs to the GcvT family. In terms of assembly, the glycine cleavage system is composed of four proteins: P, T, L and H.

It carries out the reaction N(6)-[(R)-S(8)-aminomethyldihydrolipoyl]-L-lysyl-[protein] + (6S)-5,6,7,8-tetrahydrofolate = N(6)-[(R)-dihydrolipoyl]-L-lysyl-[protein] + (6R)-5,10-methylene-5,6,7,8-tetrahydrofolate + NH4(+). In terms of biological role, the glycine cleavage system catalyzes the degradation of glycine. The sequence is that of Aminomethyltransferase from Bacillus pumilus (strain SAFR-032).